The primary structure comprises 291 residues: Ribosomal RNA small subunit methyltransferase H (291 aa).

S-adenosyl-L-methionine contacts are provided by residues 31 to 33 (GGH), aspartate 50, phenylalanine 77, aspartate 98, and glutamine 105.

Belongs to the methyltransferase superfamily. RsmH family.

It is found in the cytoplasm. It carries out the reaction cytidine(1402) in 16S rRNA + S-adenosyl-L-methionine = N(4)-methylcytidine(1402) in 16S rRNA + S-adenosyl-L-homocysteine + H(+). Functionally, specifically methylates the N4 position of cytidine in position 1402 (C1402) of 16S rRNA. This chain is Ribosomal RNA small subunit methyltransferase H, found in Endomicrobium trichonymphae.